Reading from the N-terminus, the 494-residue chain is Solute carrier family 2, facilitated glucose transporter member 3 (494 aa).

Residues 1–10 are Cytoplasmic-facing; it reads MGTTKVTAPL. Residues 11–32 form a helical membrane-spanning segment; the sequence is IFAISVATIGSFQFGYNTGVIN. At 33–64 the chain is on the extracellular side; it reads APEAIIKDFLNYTLEERSEPPPSSVLLTSLWS. Asn43 carries N-linked (GlcNAc...) asparagine glycosylation. Residues 65–85 form a helical membrane-spanning segment; the sequence is LSVAIFSVGGMIGSFSVGLFV. Residues 86–90 lie on the Cytoplasmic side of the membrane; that stretch reads NRFGR. A helical membrane pass occupies residues 91-111; the sequence is GNSMLIVNLLAIAGGCLMGFC. The Extracellular segment spans residues 112-118; sequence KIAESVE. Residues 119–142 form a helical membrane-spanning segment; it reads MLILGRLIIGLFCGLCTGFVPMYI. Topologically, residues 143–153 are cytoplasmic; the sequence is GEISPTALRGA. The helical transmembrane segment at 154-174 threads the bilayer; the sequence is FGTLNQLGIVIGILVAQIFGL. Gln159 is a D-glucose binding site. Residues 175–183 are Extracellular-facing; that stretch reads KVILGTEDL. The chain crosses the membrane as a helical span at residues 184-204; that stretch reads WPLLLGFTILPAIIQCAALPF. Residues 205-269 are Cytoplasmic-facing; the sequence is CPESPRFLLI…LFRAPNYRQP (65 aa). At Thr232 the chain carries Phosphothreonine. A helical transmembrane segment spans residues 270–290; the sequence is IIISIMLQLSQQLSGINAVFY. Positions 277–279 are important for selectivity against fructose; it reads QLS. Residues 280–281 and Asn286 contribute to the D-glucose site; that span reads QQ. Residues 291-304 lie on the Extracellular side of the membrane; the sequence is YSTGIFKDAGVQEP. A helical membrane pass occupies residues 305 to 325; it reads VYATIGAGVVNTIFTVVSVFL. Asn315 contributes to the D-glucose binding site. Residues 326-331 lie on the Cytoplasmic side of the membrane; it reads VERAGR. A helical membrane pass occupies residues 332 to 352; the sequence is RTLHLIGLGGMAFCSILMTIS. The Extracellular portion of the chain corresponds to 353–363; that stretch reads LLLKDNYSWMS. An N-linked (GlcNAc...) asparagine glycan is attached at Asn358. Residues 364 to 389 form a helical membrane-spanning segment; it reads FICIGAILVFVAFFEIGPGPIPWFIV. Glu378 and Trp386 together coordinate D-glucose. The Cytoplasmic portion of the chain corresponds to 390 to 399; that stretch reads AELFGQGPRP. The chain crosses the membrane as a helical span at residues 400 to 420; the sequence is AAMAVAGCSNWTSNFLVGLLF. The Extracellular portion of the chain corresponds to 421-429; it reads PSAAFYLGA. A helical membrane pass occupies residues 430–450; the sequence is YVFIVFTVFLVIFWVFTFFKV. Residues 451-494 are Cytoplasmic-facing; that stretch reads PETRGRTFEEITRAFEGQTQTGTRGEKGPIMEMNSIQPTKDTNA. Residues 469–494 are disordered; it reads TQTGTRGEKGPIMEMNSIQPTKDTNA. Over residues 484-494 the composition is skewed to polar residues; the sequence is NSIQPTKDTNA. Position 485 is a phosphoserine (Ser485). Thr492 carries the phosphothreonine modification.

This sequence belongs to the major facilitator superfamily. Sugar transporter (TC 2.A.1.1) family. Glucose transporter subfamily. Interacts with SMIM43; the interaction may promote SLC2A1-mediated glucose transport to meet the energy needs of mesendoderm differentiation.

The protein resides in the cell membrane. It localises to the perikaryon. It is found in the cell projection. It carries out the reaction D-glucose(out) = D-glucose(in). It catalyses the reaction D-galactose(in) = D-galactose(out). Its activity is regulated as follows. Deoxyglucose transport is inhibited by D-glucose, D-galactose and maltose. Galactose transport is inhibited by D-glucose and maltose. In terms of biological role, facilitative glucose transporter. Can also mediate the uptake of various other monosaccharides across the cell membrane. Mediates the uptake of glucose, 2-deoxyglucose, galactose, mannose, xylose and fucose, and probably also dehydroascorbate. Does not mediate fructose transport. Required for mesendoderm differentiation. This is Solute carrier family 2, facilitated glucose transporter member 3 from Bos taurus (Bovine).